A 552-amino-acid polypeptide reads, in one-letter code: NADH-ubiquinone oxidoreductase chain 5 (552 aa).

The next 15 helical transmembrane spans lie at proline 11–leucine 31, leucine 36–isoleucine 56, phenylalanine 68–tyrosine 88, leucine 89–tryptophan 109, serine 121–isoleucine 141, isoleucine 152–leucine 172, threonine 196–valine 216, leucine 229–valine 249, valine 256–isoleucine 274, histidine 287–alanine 307, leucine 322–leucine 342, isoleucine 365–tyrosine 386, serine 406–serine 426, alanine 453–valine 473, and serine 532–isoleucine 552.

This sequence belongs to the complex I subunit 5 family.

The protein localises to the mitochondrion inner membrane. It carries out the reaction a ubiquinone + NADH + 5 H(+)(in) = a ubiquinol + NAD(+) + 4 H(+)(out). Functionally, core subunit of the mitochondrial membrane respiratory chain NADH dehydrogenase (Complex I) that is believed to belong to the minimal assembly required for catalysis. Complex I functions in the transfer of electrons from NADH to the respiratory chain. The immediate electron acceptor for the enzyme is believed to be ubiquinone. The chain is NADH-ubiquinone oxidoreductase chain 5 (NAD5) from Candida albicans (strain SC5314 / ATCC MYA-2876) (Yeast).